The sequence spans 88 residues: Defensin-like protein 267 (88 aa).

The first 23 residues, 1–23 (MMLSKVVLLALLLSLSCLWVAKA), serve as a signal peptide directing secretion. 3 disulfide bridges follow: cysteine 45-cysteine 63, cysteine 51-cysteine 68, and cysteine 55-cysteine 70.

It belongs to the DEFL family.

Its subcellular location is the secreted. The polypeptide is Defensin-like protein 267 (Arabidopsis thaliana (Mouse-ear cress)).